We begin with the raw amino-acid sequence, 242 residues long: Urease accessory protein UreF (242 aa).

It belongs to the UreF family. As to quaternary structure, ureD, UreF and UreG form a complex that acts as a GTP-hydrolysis-dependent molecular chaperone, activating the urease apoprotein by helping to assemble the nickel containing metallocenter of UreC. The UreE protein probably delivers the nickel.

It is found in the cytoplasm. Required for maturation of urease via the functional incorporation of the urease nickel metallocenter. The sequence is that of Urease accessory protein UreF from Bradyrhizobium diazoefficiens (strain JCM 10833 / BCRC 13528 / IAM 13628 / NBRC 14792 / USDA 110).